Consider the following 859-residue polypeptide: Leucine--tRNA ligase (859 aa).

The 'HIGH' region signature appears at 42 to 52 (PYPSGRLHMGH). A 'KMSKS' region motif is present at residues 618–622 (KMSKS). An ATP-binding site is contributed by Lys-621.

Belongs to the class-I aminoacyl-tRNA synthetase family.

The protein resides in the cytoplasm. It catalyses the reaction tRNA(Leu) + L-leucine + ATP = L-leucyl-tRNA(Leu) + AMP + diphosphate. The protein is Leucine--tRNA ligase of Shewanella oneidensis (strain ATCC 700550 / JCM 31522 / CIP 106686 / LMG 19005 / NCIMB 14063 / MR-1).